We begin with the raw amino-acid sequence, 310 residues long: Small ribosomal subunit biogenesis GTPase RsgA 2 (310 aa).

The region spanning Leu77–Phe238 is the CP-type G domain. GTP contacts are provided by residues Asn126–Asp129 and Gly180–Thr188. 4 residues coordinate Zn(2+): Cys262, Cys267, His269, and Cys275.

This sequence belongs to the TRAFAC class YlqF/YawG GTPase family. RsgA subfamily. In terms of assembly, monomer. Associates with 30S ribosomal subunit, binds 16S rRNA. Zn(2+) is required as a cofactor.

It localises to the cytoplasm. One of several proteins that assist in the late maturation steps of the functional core of the 30S ribosomal subunit. Helps release RbfA from mature subunits. May play a role in the assembly of ribosomal proteins into the subunit. Circularly permuted GTPase that catalyzes slow GTP hydrolysis, GTPase activity is stimulated by the 30S ribosomal subunit. This is Small ribosomal subunit biogenesis GTPase RsgA 2 from Bacteroides thetaiotaomicron (strain ATCC 29148 / DSM 2079 / JCM 5827 / CCUG 10774 / NCTC 10582 / VPI-5482 / E50).